Here is a 236-residue protein sequence, read N- to C-terminus: Translocon-associated protein subunit alpha (236 aa).

Positions 1 to 20 (MNKLITLLLAVLMIISCVYS) are cleaved as a signal peptide. At 21 to 163 (DDVEITDDEV…TEKETSFDMD (143 aa)) the chain is on the lumenal side. N-linked (GlcNAc...) asparagine glycans are attached at residues N74, N94, N141, N148, and N152. A helical membrane pass occupies residues 164 to 184 (SFFLILLGLGFVGGIGYIVYG). Topologically, residues 185–236 (KMPKQKKVRTVSKVNKNAVRVETEDETAEWLSGTSAASSKVKSVQKVVKKNK) are cytoplasmic.

This sequence belongs to the TRAP-alpha family. In terms of assembly, heterotrimer of TRAP-alpha, TRAP-beta and TRAP-gamma. In terms of processing, phosphorylated in its cytoplasmic tail.

It is found in the endoplasmic reticulum membrane. Functionally, TRAP proteins are part of a complex whose function is to bind calcium to the ER membrane and thereby regulate the retention of ER resident proteins. The chain is Translocon-associated protein subunit alpha (ssr1) from Dictyostelium discoideum (Social amoeba).